A 253-amino-acid polypeptide reads, in one-letter code: Testis-expressed protein 47 (253 aa).

The chain is Testis-expressed protein 47 (Tex47) from Mus musculus (Mouse).